The following is a 130-amino-acid chain: Serum amyloid A-4 protein (130 aa).

Residues 1 to 18 form the signal peptide; the sequence is MRLATVIVLCSLFLGVSG. Residues 109–130 are disordered; sequence EEWGRSGKNPNHFRPEGLPEKF. Basic and acidic residues predominate over residues 121–130; sequence FRPEGLPEKF.

It belongs to the SAA family. As to quaternary structure, apolipoprotein of the HDL complex. In terms of tissue distribution, expressed by the liver; secreted in plasma.

It is found in the secreted. In terms of biological role, major acute phase reactant. The sequence is that of Serum amyloid A-4 protein from Mus musculus (Mouse).